The following is a 269-amino-acid chain: Formamidopyrimidine-DNA glycosylase (269 aa).

Pro2 serves as the catalytic Schiff-base intermediate with DNA. The active-site Proton donor is the Glu3. The active-site Proton donor; for beta-elimination activity is the Lys57. 3 residues coordinate DNA: His90, Arg109, and Lys150. An FPG-type zinc finger spans residues 235 to 269 (RVYGRNGEPCRTCGTPIETAKHGQRSTFFCRRCQV). The Proton donor; for delta-elimination activity role is filled by Arg259.

Belongs to the FPG family. Monomer. Zn(2+) serves as cofactor.

The enzyme catalyses Hydrolysis of DNA containing ring-opened 7-methylguanine residues, releasing 2,6-diamino-4-hydroxy-5-(N-methyl)formamidopyrimidine.. It catalyses the reaction 2'-deoxyribonucleotide-(2'-deoxyribose 5'-phosphate)-2'-deoxyribonucleotide-DNA = a 3'-end 2'-deoxyribonucleotide-(2,3-dehydro-2,3-deoxyribose 5'-phosphate)-DNA + a 5'-end 5'-phospho-2'-deoxyribonucleoside-DNA + H(+). In terms of biological role, involved in base excision repair of DNA damaged by oxidation or by mutagenic agents. Acts as a DNA glycosylase that recognizes and removes damaged bases. Has a preference for oxidized purines, such as 7,8-dihydro-8-oxoguanine (8-oxoG). Has AP (apurinic/apyrimidinic) lyase activity and introduces nicks in the DNA strand. Cleaves the DNA backbone by beta-delta elimination to generate a single-strand break at the site of the removed base with both 3'- and 5'-phosphates. This Pectobacterium atrosepticum (strain SCRI 1043 / ATCC BAA-672) (Erwinia carotovora subsp. atroseptica) protein is Formamidopyrimidine-DNA glycosylase.